We begin with the raw amino-acid sequence, 696 residues long: Probable E3 ubiquitin ligase complex SCF subunit sconB (696 aa).

Residues Met1–His12 are compositionally biased toward basic and acidic residues. The tract at residues Met1 to Arg72 is disordered. Over residues Pro55–Lys69 the composition is skewed to polar residues. Residues Ile193–Met239 enclose the F-box domain. A disordered region spans residues Ser290–Val314. The segment covering Arg302–Met313 has biased composition (basic and acidic residues). 7 WD repeats span residues Gly365–Thr402, Gly405–Ser444, His446–Leu482, Gly484–His525, Asp579–Thr622, Phe623–Thr662, and Gly665–Thr696. The disordered stretch occupies residues Asn554–Pro596.

The protein belongs to the WD repeat MET30/SCONB/SCON-2 family. In terms of assembly, component of the SCF(sconB) E3 ubiquitin ligase complex.

It functions in the pathway protein modification; protein ubiquitination. Its function is as follows. Component of the SCF(sconB) E3 ubiquitin ligase complex involved in the regulation of sulfur metabolite repression, probably by mediating the inactivation or degradation of the metR transcription factor. The sequence is that of Probable E3 ubiquitin ligase complex SCF subunit sconB (sconB) from Aspergillus fumigatus (strain ATCC MYA-4609 / CBS 101355 / FGSC A1100 / Af293) (Neosartorya fumigata).